Here is a 935-residue protein sequence, read N- to C-terminus: Potassium channel AKT1 (935 aa).

The Cytoplasmic portion of the chain corresponds to 1-106 (MARWGAARMA…YDRRYRIWET (106 aa)). A helical transmembrane segment spans residues 107–127 (FLIVLVVYSAWVSPFEFGFIP). Topologically, residues 128–136 (KPTGALATA) are extracellular. The helical transmembrane segment at 137–157 (DNVVNAFFAVDIILTFFVAYL) threads the bilayer. The Cytoplasmic portion of the chain corresponds to 158–178 (DKMSYMLEDDPKKIAWRYSTT). Residues 179–199 (WLVLDVASTIPSEFARRILPS) form a helical membrane-spanning segment. The Extracellular segment spans residues 200–205 (KLRSYG). A helical; Voltage-sensor membrane pass occupies residues 206–226 (FFNMLRLWRLRRVSSLFSRLE). Topologically, residues 227–240 (KDRHFNYFWVRCAK) are cytoplasmic. A helical transmembrane segment spans residues 241–261 (LICVTLFAVHCAACFYYLLAD). At 262 to 288 (RYPVPTSTWIGNYMADFHERSLWIRYV) the chain is on the extracellular side. An intramembrane region (pore-forming) is located at residues 289 to 308 (TSVYWSITTLTTVGYGDLHA). Topologically, residues 309–312 (ENTR) are extracellular. The helical transmembrane segment at 313–333 (EMIFNIFYMLFNLGLTAYLIG) threads the bilayer. Residues 334–935 (NMTNLVVHGT…WDAEKMKGKS (602 aa)) lie on the Cytoplasmic side of the membrane. 419–538 (LFQGVSNDLI…TIIMNNLIQF (120 aa)) contacts a nucleoside 3',5'-cyclic phosphate. ANK repeat units follow at residues 565 to 594 (DLPI…DPNE), 598 to 627 (DGHT…DPNA), 631 to 660 (EGKV…DLSS), 662 to 691 (DTGL…DVNR), 695 to 724 (DGTT…DIDK), and 728 to 757 (NGWT…ATAS). Residues 826-854 (SQAQRETDHPLSRGGLAATGSPNPSSGSR) form a disordered region. The segment covering 845–854 (GSPNPSSGSR) has biased composition (polar residues). The region spanning 859–935 (RVTISCPEKG…WDAEKMKGKS (77 aa)) is the KHA domain.

The protein belongs to the potassium channel family. Plant (TC 1.A.1.4) subfamily. In terms of assembly, the potassium channel is probably a homo- or heterotetrameric complex of pore-forming subunits. In terms of tissue distribution, expressed in roots and coleoptile of young seedlings.

The protein resides in the membrane. Its function is as follows. Highly selective inward-rectifying potassium channel that mediates potassium uptake by plant roots. Assuming opened or closed conformations in response to the voltage difference across the membrane, the channel is activated by hyperpolarization. May be a major salt-sensitive potassium channel in roots. This is Potassium channel AKT1 (AKT1) from Oryza sativa subsp. japonica (Rice).